Reading from the N-terminus, the 51-residue chain is Large ribosomal subunit protein eL40 (51 aa).

It belongs to the eukaryotic ribosomal protein eL40 family.

This Thermococcus gammatolerans (strain DSM 15229 / JCM 11827 / EJ3) protein is Large ribosomal subunit protein eL40.